We begin with the raw amino-acid sequence, 192 residues long: Peptidyl-tRNA hydrolase (192 aa).

A tRNA-binding site is contributed by Tyr14. The active-site Proton acceptor is His19. Tyr66 and Asn68 together coordinate tRNA.

This sequence belongs to the PTH family. As to quaternary structure, monomer.

The protein localises to the cytoplasm. The catalysed reaction is an N-acyl-L-alpha-aminoacyl-tRNA + H2O = an N-acyl-L-amino acid + a tRNA + H(+). In terms of biological role, hydrolyzes ribosome-free peptidyl-tRNAs (with 1 or more amino acids incorporated), which drop off the ribosome during protein synthesis, or as a result of ribosome stalling. Catalyzes the release of premature peptidyl moieties from peptidyl-tRNA molecules trapped in stalled 50S ribosomal subunits, and thus maintains levels of free tRNAs and 50S ribosomes. This chain is Peptidyl-tRNA hydrolase, found in Coprothermobacter proteolyticus (strain ATCC 35245 / DSM 5265 / OCM 4 / BT).